The sequence spans 177 residues: MPAWGALFLLWATAEATKDCPSPCTCRALETMGLWVDCRGHGLTALPALPARTRHLLLANNSLQSVPPGAFDHLPQLQTLDVTQNPWHCDCSLTYLRLWLEDRTPEALLQVRCASPSLAAHGPLGRLTGYQLGSCGWQLQASWVRPGVLWDVALVAVAALGLALLAGLLCATTEALD.

A signal peptide spans 1–16 (MPAWGALFLLWATAEA). The 35-residue stretch at 17-51 (TKDCPSPCTCRALETMGLWVDCRGHGLTALPALPA) folds into the LRRNT domain. Residues 17 to 147 (TKDCPSPCTC…QLQASWVRPG (131 aa)) lie on the Extracellular side of the membrane. N-linked (GlcNAc...) asparagine glycosylation occurs at N60. One copy of the LRR repeat lies at 60 to 83 (NNSLQSVPPGAFDHLPQLQTLDVT). An LRRCT domain is found at 85–137 (NPWHCDCSLTYLRLWLEDRTPEALLQVRCASPSLAAHGPLGRLTGYQLGSCGW). A helical membrane pass occupies residues 148 to 168 (VLWDVALVAVAALGLALLAGL). Residues 169–177 (LCATTEALD) lie on the Cytoplasmic side of the membrane.

Two GP-Ib beta are disulfide-linked to one GP-Ib alpha. GP-IX is complexed with the GP-Ib heterodimer via a non covalent linkage.

It is found in the membrane. In terms of biological role, the GPIb-V-IX complex functions as the vWF receptor and mediates vWF-dependent platelet adhesion to blood vessels. The adhesion of platelets to injured vascular surfaces in the arterial circulation is a critical initiating event in hemostasis. GP-IX may provide for membrane insertion and orientation of GP-Ib. The protein is Platelet glycoprotein IX (GP9) of Homo sapiens (Human).